The chain runs to 464 residues: Galactose-proton symporter (464 aa).

Over 1–15 (MPDAKKQGRSNKAMT) the chain is Cytoplasmic. A helical transmembrane segment spans residues 16 to 36 (FFVCFLAALAGLLFGLDIGVI). Over 37-56 (AGALPFIADEFQITSHTQEW) the chain is Periplasmic. Residues 57–77 (VVSSMMFGAAVGAVGSGWLSF) form a helical membrane-spanning segment. The Cytoplasmic segment spans residues 78–84 (KLGRKKS). A helical transmembrane segment spans residues 85–105 (LMIGAILFVAGSLFSAAAPNV). The Periplasmic portion of the chain corresponds to 106–112 (EVLILSR). The chain crosses the membrane as a helical span at residues 113 to 133 (VLLGLAVGVASYTAPLYLSEI). Over 134-139 (APEKIR) the chain is Cytoplasmic. The helical transmembrane segment at 140–160 (GSMISMYQLMITIGILGAYLS) threads the bilayer. Residues 161–171 (DTAFSYTGAWR) lie on the Periplasmic side of the membrane. The chain crosses the membrane as a helical span at residues 172–192 (WMLGVIIIPAILLLIGVFFLP). Residues 193–250 (DSPRWFAAKRRFVDAERVLLRLRDTSAEAKRELDEIRESLQVKQSGWALFKENSNFRR) are Cytoplasmic-facing. Residues 251 to 271 (AVFLGVLLQVMQQFTGMNVIM) traverse the membrane as a helical segment. Residues 272–290 (YYAPKIFELAGYTNTTEQM) are Periplasmic-facing. Residues 291–311 (WGTVIVGLTNVLATFIAIGLV) form a helical membrane-spanning segment. The Cytoplasmic portion of the chain corresponds to 312–321 (DRWGRKPTLT). Residues 322–342 (LGFLVMAAGMGVLGTMMHIGI) traverse the membrane as a helical segment. Topologically, residues 343–351 (HSPSAQYFA) are periplasmic. The chain crosses the membrane as a helical span at residues 352 to 372 (IAMLLMFIVGFAMSAGPLIWV). Residues 373-394 (LCSEIQPLKGRDFGITCSTATN) are Cytoplasmic-facing. The chain crosses the membrane as a helical span at residues 395–415 (WIANMIVGATFLTMLNTLGNA). A topological domain (periplasmic) is located at residue Asn416. Residues 417–437 (TFWVYAALNVLFILLTLWLVP) form a helical membrane-spanning segment. Residues 438–464 (ETKHVSLEHIERNLMKGRKLREIGAHD) are Cytoplasmic-facing.

The protein belongs to the major facilitator superfamily. Sugar transporter (TC 2.A.1.1) family.

It is found in the cell inner membrane. Its function is as follows. Uptake of galactose across the boundary membrane with the concomitant transport of protons into the cell (symport system). This chain is Galactose-proton symporter (galP), found in Escherichia coli O6:H1 (strain CFT073 / ATCC 700928 / UPEC).